The following is a 634-amino-acid chain: DNA-directed RNA polymerase subunit gamma (634 aa).

Positions 74, 76, 89, and 92 each coordinate Zn(2+). Mg(2+)-binding residues include D471, D473, and D475.

It belongs to the RNA polymerase beta' chain family. RpoC1 subfamily. As to quaternary structure, in cyanobacteria the RNAP catalytic core is composed of 2 alpha, 1 beta, 1 beta', 1 gamma and 1 omega subunit. When a sigma factor is associated with the core the holoenzyme is formed, which can initiate transcription. It depends on Mg(2+) as a cofactor. Zn(2+) serves as cofactor.

The catalysed reaction is RNA(n) + a ribonucleoside 5'-triphosphate = RNA(n+1) + diphosphate. Its function is as follows. DNA-dependent RNA polymerase catalyzes the transcription of DNA into RNA using the four ribonucleoside triphosphates as substrates. The protein is DNA-directed RNA polymerase subunit gamma of Prochlorococcus marinus (strain SARG / CCMP1375 / SS120).